Consider the following 204-residue polypeptide: Urease accessory protein UreG (204 aa).

12–19 (GPVGSGKT) provides a ligand contact to GTP.

It belongs to the SIMIBI class G3E GTPase family. UreG subfamily. In terms of assembly, homodimer. UreD, UreF and UreG form a complex that acts as a GTP-hydrolysis-dependent molecular chaperone, activating the urease apoprotein by helping to assemble the nickel containing metallocenter of UreC. The UreE protein probably delivers the nickel.

The protein resides in the cytoplasm. Its function is as follows. Facilitates the functional incorporation of the urease nickel metallocenter. This process requires GTP hydrolysis, probably effectuated by UreG. In Hahella chejuensis (strain KCTC 2396), this protein is Urease accessory protein UreG.